The sequence spans 503 residues: MDLVPSFSLETWVLLALSLVLLYRYATYSHGFFKKLGIPGPKPLPLFGNVLSYRKGMWSFDIECRKKYGNMWGLYDGPQPVLAITEPDMIKAVLVKECYSVFTNRRSLVPVGFMKKAVSLSEDEEWKRIRTQLSPNFTSGKLKEMFPIIKQYGDVLVKNLRQEAEKGKPVQLKEIFGAYSMDIIVATAFGVNVDSLNNPHDPFVSKARKLFRFDFLSPFLLSIVMFPFLTQLYEMLSISIFPRDSLKFFTKFVKKTKENHLESNKKQRVDFLQMMLNSQNFKDTESHKALSDVEILAQSIIFIFAGYETTSSTLSFIMYSLATHPDVQKKLQQEIDKTLPNKAFPTYDVMMEMEYLDMVVNETLRLYPVTNRIERMSKKDFEINGMSFPKGTGVMIPSFALHRDSKYWPEPDEFRPERFSKKNKENIDPYIYMPFGNGPRNCIGMRMALMNLKLALIRLLQNFSFYPCKETQIPLRLGSEALLQPAKPIILKVVSRDETIRGA.

Cysteine 442 contacts heme.

The protein belongs to the cytochrome P450 family. Heme is required as a cofactor.

It localises to the endoplasmic reticulum membrane. The protein localises to the microsome membrane. The enzyme catalyses an organic molecule + reduced [NADPH--hemoprotein reductase] + O2 = an alcohol + oxidized [NADPH--hemoprotein reductase] + H2O + H(+). Cytochromes P450 are a group of heme-thiolate monooxygenases. In liver microsomes, this enzyme is involved in an NADPH-dependent electron transport pathway. It oxidizes a variety of structurally unrelated compounds, including steroids, fatty acids, and xenobiotics. In Cavia porcellus (Guinea pig), this protein is Cytochrome P450 3A14 (CYP3A14).